The sequence spans 218 residues: 2-C-methyl-D-erythritol 4-phosphate cytidylyltransferase (218 aa).

Belongs to the IspD/TarI cytidylyltransferase family. IspD subfamily.

The enzyme catalyses 2-C-methyl-D-erythritol 4-phosphate + CTP + H(+) = 4-CDP-2-C-methyl-D-erythritol + diphosphate. It participates in isoprenoid biosynthesis; isopentenyl diphosphate biosynthesis via DXP pathway; isopentenyl diphosphate from 1-deoxy-D-xylulose 5-phosphate: step 2/6. In terms of biological role, catalyzes the formation of 4-diphosphocytidyl-2-C-methyl-D-erythritol from CTP and 2-C-methyl-D-erythritol 4-phosphate (MEP). The chain is 2-C-methyl-D-erythritol 4-phosphate cytidylyltransferase from Chlamydia muridarum (strain MoPn / Nigg).